A 370-amino-acid polypeptide reads, in one-letter code: Chaperone protein DnaJ (370 aa).

The 66-residue stretch at Asp-5–Gly-70 folds into the J domain. The CR-type zinc-finger motif lies at Gly-134–Gln-212. Residues Cys-147, Cys-150, Cys-164, Cys-167, Cys-186, Cys-189, Cys-200, and Cys-203 each coordinate Zn(2+). CXXCXGXG motif repeat units follow at residues Cys-147–Gly-154, Cys-164–Gly-171, Cys-186–Gly-193, and Cys-200–Gly-207. A disordered region spans residues Asp-351–Asp-370.

Belongs to the DnaJ family. Homodimer. The cofactor is Zn(2+).

Its subcellular location is the cytoplasm. Its function is as follows. Participates actively in the response to hyperosmotic and heat shock by preventing the aggregation of stress-denatured proteins and by disaggregating proteins, also in an autonomous, DnaK-independent fashion. Unfolded proteins bind initially to DnaJ; upon interaction with the DnaJ-bound protein, DnaK hydrolyzes its bound ATP, resulting in the formation of a stable complex. GrpE releases ADP from DnaK; ATP binding to DnaK triggers the release of the substrate protein, thus completing the reaction cycle. Several rounds of ATP-dependent interactions between DnaJ, DnaK and GrpE are required for fully efficient folding. Also involved, together with DnaK and GrpE, in the DNA replication of plasmids through activation of initiation proteins. In Acinetobacter baumannii (strain AB0057), this protein is Chaperone protein DnaJ.